A 193-amino-acid polypeptide reads, in one-letter code: Probable thymidylate kinase (193 aa).

Residue Gly-7 to Thr-14 participates in ATP binding.

The protein belongs to the thymidylate kinase family.

It catalyses the reaction dTMP + ATP = dTDP + ADP. The sequence is that of Probable thymidylate kinase (tmk) from Thermoplasma acidophilum (strain ATCC 25905 / DSM 1728 / JCM 9062 / NBRC 15155 / AMRC-C165).